The following is a 181-amino-acid chain: Small ribosomal subunit protein cS23 (181 aa).

A disordered region spans residues 1 to 40 (MLPMSVHPATTPALASRPRVSLPRPSTPSSSSSLVHLKSR). Residues 14-36 (LASRPRVSLPRPSTPSSSSSLVH) show a composition bias toward low complexity.

This sequence belongs to the chloroplast-specific ribosomal protein cS23 family. In terms of assembly, part of the 30S ribosomal subunit.

The protein resides in the plastid. Its subcellular location is the chloroplast. Its function is as follows. Component of the chloroplast ribosome (chloro-ribosome), a dedicated translation machinery responsible for the synthesis of chloroplast genome-encoded proteins, including proteins of the transcription and translation machinery and components of the photosynthetic apparatus. This chain is Small ribosomal subunit protein cS23 (PSRP3), found in Hordeum vulgare (Barley).